We begin with the raw amino-acid sequence, 308 residues long: Glycerol-3-phosphate dehydrogenase [NAD(P)+] (308 aa).

Positions 15, 35, 36, and 83 each coordinate NADPH. The sn-glycerol 3-phosphate site is built by K83 and G111. Residue S115 participates in NADPH binding. The sn-glycerol 3-phosphate site is built by K166, D219, S229, R230, and N231. Residue K166 is the Proton acceptor of the active site. R230 contributes to the NADPH binding site. E256 is an NADPH binding site.

Belongs to the NAD-dependent glycerol-3-phosphate dehydrogenase family.

It localises to the cytoplasm. It catalyses the reaction sn-glycerol 3-phosphate + NAD(+) = dihydroxyacetone phosphate + NADH + H(+). The catalysed reaction is sn-glycerol 3-phosphate + NADP(+) = dihydroxyacetone phosphate + NADPH + H(+). It participates in membrane lipid metabolism; glycerophospholipid metabolism. Functionally, catalyzes the reduction of the glycolytic intermediate dihydroxyacetone phosphate (DHAP) to sn-glycerol 3-phosphate (G3P), the key precursor for phospholipid synthesis. In Synechococcus elongatus (strain ATCC 33912 / PCC 7942 / FACHB-805) (Anacystis nidulans R2), this protein is Glycerol-3-phosphate dehydrogenase [NAD(P)+].